Reading from the N-terminus, the 555-residue chain is CTP synthase (555 aa).

An amidoligase domain region spans residues 1–265; it reads MTRYIFITGG…GNRVCEKLNI (265 aa). A CTP-binding site is contributed by Ser-13. Ser-13 contributes to the UTP binding site. Residues 14–19 and Asp-71 each bind ATP; that span reads SLGKGI. Mg(2+) contacts are provided by Asp-71 and Glu-139. CTP-binding positions include 146–148, 186–191, and Lys-222; these read DIE and KTKPTQ. Residues 186 to 191 and Lys-222 each bind UTP; that span reads KTKPTQ. The region spanning 290–541 is the Glutamine amidotransferase type-1 domain; sequence TVAVVGKYVD…IKAGLAAKEA (252 aa). Gly-351 contributes to the L-glutamine binding site. Cys-378 functions as the Nucleophile; for glutamine hydrolysis in the catalytic mechanism. L-glutamine is bound by residues 379–382, Glu-402, and Arg-469; that span reads LGMQ. Active-site residues include His-514 and Glu-516.

This sequence belongs to the CTP synthase family. In terms of assembly, homotetramer.

The enzyme catalyses UTP + L-glutamine + ATP + H2O = CTP + L-glutamate + ADP + phosphate + 2 H(+). It carries out the reaction L-glutamine + H2O = L-glutamate + NH4(+). It catalyses the reaction UTP + NH4(+) + ATP = CTP + ADP + phosphate + 2 H(+). It participates in pyrimidine metabolism; CTP biosynthesis via de novo pathway; CTP from UDP: step 2/2. Its activity is regulated as follows. Allosterically activated by GTP, when glutamine is the substrate; GTP has no effect on the reaction when ammonia is the substrate. The allosteric effector GTP functions by stabilizing the protein conformation that binds the tetrahedral intermediate(s) formed during glutamine hydrolysis. Inhibited by the product CTP, via allosteric rather than competitive inhibition. Functionally, catalyzes the ATP-dependent amination of UTP to CTP with either L-glutamine or ammonia as the source of nitrogen. Regulates intracellular CTP levels through interactions with the four ribonucleotide triphosphates. This is CTP synthase from Coxiella burnetii (strain RSA 493 / Nine Mile phase I).